A 985-amino-acid chain; its full sequence is Regulator of telomere elongation helicase 1 homolog (985 aa).

Positions 7-303 (AGIPVHFPFE…QDMAGDEPKD (297 aa)) constitute a Helicase ATP-binding domain. ATP is bound at residue 42–49 (SPTGTGKT). 4 residues coordinate [4Fe-4S] cluster: cysteine 146, cysteine 164, cysteine 173, and cysteine 209. Positions 252–255 (DEAH) match the DEAH box motif. Threonine 874 is subject to Phosphothreonine.

Belongs to the helicase family. RAD3/XPD subfamily.

The protein localises to the nucleus. The catalysed reaction is ATP + H2O = ADP + phosphate + H(+). Its function is as follows. A probable ATP-dependent DNA helicase implicated in DNA repair and the maintenance of genomic stability. Acts as an anti-recombinase to counteract toxic recombination and limit crossover during meiosis. Regulates meiotic recombination and crossover homeostasis by physically dissociating strand invasion events and thereby promotes noncrossover repair by meiotic synthesis dependent strand annealing (SDSA) as well as disassembly of D loop recombination intermediates. The sequence is that of Regulator of telomere elongation helicase 1 homolog from Drosophila erecta (Fruit fly).